The following is a 1028-amino-acid chain: Formin-like protein 3 (1028 aa).

G2 is lipidated: N-myristoyl glycine. The GBD/FH3 domain maps to 26 to 472 (MPMPEPCELE…EAFQRRCHLE (447 aa)). Position 95 is a phosphothreonine (T95). S174 bears the Phosphoserine mark. A disordered region spans residues 493–541 (ELSEGMPPSDLDLLAPAPPPEEVLPLPPPPAPPLPPPPPPLPDKCPPAP). The span at 508–541 (PAPPPEEVLPLPPPPAPPLPPPPPPLPDKCPPAP) shows a compositional bias: pro residues. The 391-residue stretch at 561–951 (IKKPIKTKFR…MREKQLAQEA (391 aa)) folds into the FH2 domain. Residues 986 to 1018 (YEGKDGTIEDIITVLKSVPFTARTAKRGSRFFC) enclose the DAD domain. The residue at position 1014 (S1014) is a Phosphoserine.

The protein belongs to the formin homology family. As to quaternary structure, interacts with SRGAP2 (via SH3 domain). In terms of tissue distribution, expressed in endothelial cells.

It localises to the cytoplasm. The protein localises to the cell membrane. Its function is as follows. Plays a role in the regulation of cell morphology and cytoskeletal organization. Required in the control of cell shape and migration. Required for developmental angiogenesis. In this process, required for microtubule reorganization and for efficient endothelial cell elongation. In quiescent endothelial cells, triggers rearrangement of the actin cytoskeleton, but does not alter microtubule alignement. The polypeptide is Formin-like protein 3 (FMNL3) (Homo sapiens (Human)).